A 435-amino-acid polypeptide reads, in one-letter code: Putative acid phosphatase F26C11.1 (435 aa).

The active-site Nucleophile is the His-38. The Proton donor role is filled by Asp-317. A disulfide bond links Cys-382 and Cys-388.

It belongs to the histidine acid phosphatase family.

It catalyses the reaction a phosphate monoester + H2O = an alcohol + phosphate. The chain is Putative acid phosphatase F26C11.1 from Caenorhabditis elegans.